The sequence spans 179 residues: Large ribosomal subunit protein uL5 (179 aa).

It belongs to the universal ribosomal protein uL5 family. In terms of assembly, part of the 50S ribosomal subunit; part of the 5S rRNA/L5/L18/L25 subcomplex. Contacts the 5S rRNA and the P site tRNA. Forms a bridge to the 30S subunit in the 70S ribosome.

This is one of the proteins that bind and probably mediate the attachment of the 5S RNA into the large ribosomal subunit, where it forms part of the central protuberance. In the 70S ribosome it contacts protein S13 of the 30S subunit (bridge B1b), connecting the 2 subunits; this bridge is implicated in subunit movement. Contacts the P site tRNA; the 5S rRNA and some of its associated proteins might help stabilize positioning of ribosome-bound tRNAs. In Rickettsia bellii (strain OSU 85-389), this protein is Large ribosomal subunit protein uL5.